Reading from the N-terminus, the 179-residue chain is Acireductone dioxygenase (179 aa).

The tract at residues 1–21 (MVQAWYMDDSTEDQRKPHHLQ) is disordered. Residues His-88, His-90, Glu-94, and His-133 each contribute to the Fe(2+) site. Ni(2+) contacts are provided by His-88, His-90, Glu-94, and His-133.

This sequence belongs to the acireductone dioxygenase (ARD) family. Monomer. Interacts with MMP14. Fe(2+) is required as a cofactor. Ni(2+) serves as cofactor.

The protein localises to the cytoplasm. It is found in the nucleus. It localises to the cell membrane. It carries out the reaction 1,2-dihydroxy-5-(methylsulfanyl)pent-1-en-3-one + O2 = 4-methylsulfanyl-2-oxobutanoate + formate + 2 H(+). The catalysed reaction is 1,2-dihydroxy-5-(methylsulfanyl)pent-1-en-3-one + O2 = 3-(methylsulfanyl)propanoate + CO + formate + 2 H(+). The protein operates within amino-acid biosynthesis; L-methionine biosynthesis via salvage pathway; L-methionine from S-methyl-5-thio-alpha-D-ribose 1-phosphate: step 5/6. Functionally, catalyzes 2 different reactions between oxygen and the acireductone 1,2-dihydroxy-3-keto-5-methylthiopentene (DHK-MTPene) depending upon the metal bound in the active site. Fe-containing acireductone dioxygenase (Fe-ARD) produces formate and 2-keto-4-methylthiobutyrate (KMTB), the alpha-ketoacid precursor of methionine in the methionine recycle pathway. Ni-containing acireductone dioxygenase (Ni-ARD) produces methylthiopropionate, carbon monoxide and formate, and does not lie on the methionine recycle pathway. The sequence is that of Acireductone dioxygenase (adi1) from Xenopus tropicalis (Western clawed frog).